Reading from the N-terminus, the 240-residue chain is Dihydromonapterin reductase (240 aa).

Tyr-152 functions as the Proton acceptor in the catalytic mechanism.

Belongs to the short-chain dehydrogenases/reductases (SDR) family. FolM subfamily.

It catalyses the reaction (6S)-5,6,7,8-tetrahydrofolate + NADP(+) = 7,8-dihydrofolate + NADPH + H(+). It carries out the reaction 7,8-dihydromonapterin + NADPH + H(+) = 5,6,7,8-tetrahydromonapterin + NADP(+). Catalyzes the reduction of dihydromonapterin to tetrahydromonapterin. Also has lower activity with dihydrofolate. The protein is Dihydromonapterin reductase (folM) of Escherichia coli O139:H28 (strain E24377A / ETEC).